The primary structure comprises 638 residues: Threonine--tRNA ligase (638 aa).

Positions 1-59 (MEKIKVKIKGKEYEVEKGTPLGKIFELAGIKDALGGVINGKIIDLQTPVRESGEIKPVY) constitute a TGS domain. The segment at 243–536 (DHRRLGKELE…LLEHYAGLLP (294 aa)) is catalytic. Zn(2+) contacts are provided by cysteine 336, histidine 387, and histidine 513.

Belongs to the class-II aminoacyl-tRNA synthetase family. As to quaternary structure, homodimer. It depends on Zn(2+) as a cofactor.

The protein resides in the cytoplasm. The enzyme catalyses tRNA(Thr) + L-threonine + ATP = L-threonyl-tRNA(Thr) + AMP + diphosphate + H(+). Functionally, catalyzes the attachment of threonine to tRNA(Thr) in a two-step reaction: L-threonine is first activated by ATP to form Thr-AMP and then transferred to the acceptor end of tRNA(Thr). Also edits incorrectly charged L-seryl-tRNA(Thr). The polypeptide is Threonine--tRNA ligase (Aquifex aeolicus (strain VF5)).